Consider the following 288-residue polypeptide: tRNA pseudouridine synthase A (288 aa).

Aspartate 58 acts as the Nucleophile in catalysis. Tyrosine 124 is a binding site for substrate.

This sequence belongs to the tRNA pseudouridine synthase TruA family. In terms of assembly, homodimer.

The enzyme catalyses uridine(38/39/40) in tRNA = pseudouridine(38/39/40) in tRNA. Functionally, formation of pseudouridine at positions 38, 39 and 40 in the anticodon stem and loop of transfer RNAs. In Corynebacterium diphtheriae (strain ATCC 700971 / NCTC 13129 / Biotype gravis), this protein is tRNA pseudouridine synthase A.